The following is a 628-amino-acid chain: MAAAGAGPGQEAGAGPGPGAVANATGAEEGEMKPVAAGAAAPPGEGISAAPTVEPSSGEAEGGEANLVDVSGGLETESSNGKDTLEGAGDTSEVMDTQAGSVDEENGRQLGEVELQCGICTKWFTADTFGIDTSSCLPFMTNYSFHCNVCHHSGNTYFLRKQANLKEMCLSALANLTWQSRTQDEHPKTMFSKDKDIIPFIDKYWECMTTRQRPGKMTWPNNIVKTMSKERDVFLVKEHPDPGSKDPEEDYPKFGLLDQDLSNIGPAYDNQKQSSAVSTSGNLNGGIAAGSSGKGRGAKRKQQDGGTTGTTKKARSDPLFSAQRLPPHGYPLEHPFNKDGYRYILAEPDPHAPDPEKLELDCWAGKPIPGDLYRACLYERVLLALHDRAPQLKISDDRLTVVGEKGYSMVRASHGVRKGAWYFEITVDEMPPDTAARLGWSQPLGNLQAPLGYDKFSYSWRSKKGTKFHQSIGKHYSSGYGQGDVLGFYINLPEDTETAKSLPDTYKDKALIKFKSYLYFEEKDFVDKAEKSLKQTPHSEIIFYKNGVNQGVAYKDIFEGVYFPAISLYKSCTVSINFGPCFKYPPKDLTYRPMSDMGWGAVVEHTLADVLYHVETEVDGRRSPPWEP.

Met1 is subject to N-acetylmethionine. The segment covering 1–18 (MAAAGAGPGQEAGAGPGP) has biased composition (gly residues). A PHD-type; atypical zinc finger spans residues 1–66 (MAAAGAGPGQ…SGEAEGGEAN (66 aa)). The segment at 1–107 (MAAAGAGPGQ…QAGSVDEENG (107 aa)) is disordered. The segment covering 36–65 (AAGAAAPPGEGISAAPTVEPSSGEAEGGEA) has biased composition (low complexity). The segment at 67–177 (LVDVSGGLET…MCLSALANLT (111 aa)) is DNA-binding. Ser101 carries the phosphoserine modification. The C4-type zinc-finger motif lies at 117–150 (CGICTKWFTADTFGIDTSSCLPFMTNYSFHCNVC). Residues 235–252 (LVKEHPDPGSKDPEEDYP) are compositionally biased toward basic and acidic residues. Residues 235 to 331 (LVKEHPDPGS…AQRLPPHGYP (97 aa)) form a disordered region. The segment covering 270 to 282 (NQKQSSAVSTSGN) has biased composition (polar residues). A compositionally biased stretch (gly residues) spans 283-295 (LNGGIAAGSSGKG). Arg296 carries the post-translational modification Asymmetric dimethylarginine; by PRMT1 and PRMT5. Ser316 is subject to Phosphoserine. The interval 316–628 (SDPLFSAQRL…DGRRSPPWEP (313 aa)) is interaction with RBBP5. The B30.2/SPRY domain maps to 360–583 (LDCWAGKPIP…VSINFGPCFK (224 aa)).

In terms of assembly, interacts with HCFC1. Core component of several methyltransferase-containing complexes including MLL1/MLL, MLL2/3 (also named ASCOM complex) and MLL4/WBP7. Each complex is at least composed of ASH2L, RBBP5, WDR5, DPY30, one or more specific histone methyltransferases (KMT2A/MLL1, KMT2D/MLL2, KMT2C/MLL3 and KMT2B/MLL4), and the facultative components PAGR1, BACC1, CHD8, E2F6, HCFC1, HCFC2, HSP70, INO80C, KDM6A, KANSL1, LAS1L, MAX, MCRS1, MEN1, MGA, KAT8/MOF, NCOA6, PAXIP1/PTIP, PELP1, PHF20, PRP31, RING2, RUVB1/TIP49A, RUVB2/TIP49B, SENP3, TAF1, TAF4, TAF6, TAF7, TAF9, TEX10 and alpha- and beta-tubulin. Component of the SET1 complex, at least composed of the catalytic subunit (SETD1A or SETD1B), WDR5, WDR82, RBBP5, ASH2L/ASH2, CXXC1/CFP1, HCFC1 and DPY30. Found in a complex with RBBP5, ASH2L, DPY30, KMT2A, KMT2D and WDR5. Component of a histone methylation complex composed of at least ZNF335, RBBP5, ASH2L and WDR5; the complex may have histone H3-specific methyltransferase activity, however does not have specificity for 'Lys-4' of histone H3. Within the complex, interacts with ZNF335. Interacts with RBBP5. Components of this complex may associate with components of a nuclear receptor-mediated transcription complex to form a complex at least composed of ZNF335, HCFC1, CCAR2, EMSY, MKI67, RBBP5, ASH2L and WDR5. Within this complex also interacts with CCAR2 and EMSY. Interacts with DPY30. Interacts with SETD1A and SETD1B. In terms of processing, both monomethylated and dimethylated on arginine residues in the C-terminus. Arg-296 is the major site. Methylation is not required for nuclear localization, nor for MLL complex integrity or maintenance of global histone H3K4me3 levels. In terms of tissue distribution, ubiquitously expressed. Predominantly expressed in adult heart and testis and fetal lung and liver, with barely detectable expression in adult lung, liver, kidney, prostate, and peripheral leukocytes.

Its subcellular location is the nucleus. Transcriptional regulator. Component or associated component of some histone methyltransferase complexes which regulates transcription through recruitment of those complexes to gene promoters. Component of the Set1/Ash2 histone methyltransferase (HMT) complex, a complex that specifically methylates 'Lys-4' of histone H3, but not if the neighboring 'Lys-9' residue is already methylated. As part of the MLL1/MLL complex it is involved in methylation and dimethylation at 'Lys-4' of histone H3. May play a role in hematopoiesis. In association with RBBP5 and WDR5, stimulates the histone methyltransferase activities of KMT2A, KMT2B, KMT2C, KMT2D, SETD1A and SETD1B. The sequence is that of Set1/Ash2 histone methyltransferase complex subunit ASH2 (ASH2L) from Homo sapiens (Human).